The sequence spans 227 residues: PKHD-type hydroxylase CC_0027 (227 aa).

Residues 78–178 (TILSPMFNRY…RTASFFWIQS (101 aa)) form the Fe2OG dioxygenase domain. Residues histidine 96, aspartate 98, and histidine 159 each contribute to the Fe cation site. Arginine 169 lines the 2-oxoglutarate pocket.

The cofactor is Fe(2+). L-ascorbate is required as a cofactor.

This is PKHD-type hydroxylase CC_0027 from Caulobacter vibrioides (strain ATCC 19089 / CIP 103742 / CB 15) (Caulobacter crescentus).